A 315-amino-acid polypeptide reads, in one-letter code: Protein OPG185 (315 aa).

The N-terminal stretch at 1-16 (MTRLPILLLLISLVYA) is a signal peptide. In terms of domain architecture, Ig-like V-type spans 17–121 (TPFPQTSKKI…NDTDKVDYEE (105 aa)). The Virion surface portion of the chain corresponds to 17 to 279 (TPFPQTSKKI…SNYKTKDFVE (263 aa)). A disulfide bond links Cys-34 and Cys-103. N-linked (GlcNAc...) asparagine; by host glycans are attached at residues Asn-37, Asn-69, Asn-112, and Asn-161. Positions 194–213 (TVSATSGESTTDETPEPITD) are disordered. Residue Asn-254 is glycosylated (N-linked (GlcNAc...) asparagine; by host). The helical transmembrane segment at 280 to 303 (IFGITALIILSAVAIFCITYYICN) threads the bilayer. Over 304–315 (KRSRKYKTENKV) the chain is Intravirion.

This sequence belongs to the orthopoxvirus OPG185 family. In terms of assembly, heterodimerizes with OPG040. The heterodimer OPG185-OPG040 interacts with components of the entry fusion complex OPG143 and OPG094. Heterodimer with C3/VPC protein; disulfide-linked. In terms of processing, glycosylated; contains phosphate and sulfate-substituted glycans. O-glycosylation is required for hemagglutination and hemadsorption activities of infected cell membranes.

The protein resides in the virion membrane. Its subcellular location is the host membrane. Functionally, prevents cell to cell fusion by interacting with and directing the viral OPG040 protein on the host plasma membrane. The OPG185-OPG040 complex associates with components of the entry fusion complex (EFC) presumably to avoid superinfection and syncytium formation. Via its interaction with C3/VCP protein, protects the infected cell and probably also the extracellular enveloped virus from complement attack. The protein is Protein OPG185 (OPG185) of Vaccinia virus (strain Copenhagen) (VACV).